The primary structure comprises 407 residues: Phosphoglycerate kinase (407 aa).

Substrate-binding positions include 24-26 (DFN), Arg-40, 63-66 (HLGR), Arg-121, and Arg-154. Residues Lys-205, Glu-337, and 363 to 366 (GGDS) each bind ATP.

Belongs to the phosphoglycerate kinase family. As to quaternary structure, monomer.

The protein localises to the cytoplasm. The enzyme catalyses (2R)-3-phosphoglycerate + ATP = (2R)-3-phospho-glyceroyl phosphate + ADP. Its pathway is carbohydrate degradation; glycolysis; pyruvate from D-glyceraldehyde 3-phosphate: step 2/5. The polypeptide is Phosphoglycerate kinase (Gloeobacter violaceus (strain ATCC 29082 / PCC 7421)).